A 377-amino-acid chain; its full sequence is Acetylornithine aminotransferase (377 aa).

Residues 94–95 (GT) and Phe121 each bind pyridoxal 5'-phosphate. Residue Arg124 coordinates N(2)-acetyl-L-ornithine. Pyridoxal 5'-phosphate is bound at residue 206 to 209 (DEIQ). An N6-(pyridoxal phosphate)lysine modification is found at Lys235. Ser263 serves as a coordination point for N(2)-acetyl-L-ornithine. Thr264 serves as a coordination point for pyridoxal 5'-phosphate.

It belongs to the class-III pyridoxal-phosphate-dependent aminotransferase family. ArgD subfamily. Homodimer. The cofactor is pyridoxal 5'-phosphate.

It is found in the cytoplasm. It carries out the reaction N(2)-acetyl-L-ornithine + 2-oxoglutarate = N-acetyl-L-glutamate 5-semialdehyde + L-glutamate. It participates in amino-acid biosynthesis; L-arginine biosynthesis; N(2)-acetyl-L-ornithine from L-glutamate: step 4/4. The polypeptide is Acetylornithine aminotransferase (Lactococcus lactis subsp. lactis (strain IL1403) (Streptococcus lactis)).